The sequence spans 250 residues: Ribosome-inactivating protein luffin-B (250 aa).

Glutamate 160 is a catalytic residue.

It belongs to the ribosome-inactivating protein family. Type 1 RIP subfamily.

It carries out the reaction Endohydrolysis of the N-glycosidic bond at one specific adenosine on the 28S rRNA.. The sequence is that of Ribosome-inactivating protein luffin-B from Luffa aegyptiaca (Sponge gourd).